Reading from the N-terminus, the 479-residue chain is Phosphoglycerate kinase, glycosomal (479 aa).

Val23, Asp24, Phe25, Asn26, Arg39, Ser61, His62, Gly64, Arg65, Arg132, His168, and Arg169 together coordinate (2R)-3-phosphoglycerate. ADP is bound by residues Gly214 and Ala215. A CDP-binding site is contributed by Gly214. The AMP site is built by Ala215 and Lys216. Position 215 (Ala215) interacts with ATP. Residue Ala215 coordinates Mg(2+). (2R)-3-phosphoglycerate is bound at residue Lys216. CDP is bound at residue Asp219. Asp219 serves as a coordination point for Mg(2+). ADP is bound by residues Lys220 and Gly238. An AMP-binding site is contributed by Lys220. Residue Lys220 coordinates ATP. Gly238 is a CDP binding site. AMP is bound by residues Ala239 and Ala311. Residues Ala239 and Ala311 each coordinate ATP. ADP is bound by residues Ala311 and Asn335. CDP contacts are provided by Gly336 and Phe341. The ADP site is built by Phe341, Glu342, Asp374, and Ser375. Glu342 is an AMP binding site. ATP-binding residues include Glu342, Asp374, and Ser375. Residue Asp374 coordinates Mg(2+).

It belongs to the phosphoglycerate kinase family. In terms of assembly, monomer. The cofactor is Mg(2+).

Its subcellular location is the glycosome. It carries out the reaction (2R)-3-phosphoglycerate + ATP = (2R)-3-phospho-glyceroyl phosphate + ADP. Its pathway is carbohydrate degradation; glycolysis; pyruvate from D-glyceraldehyde 3-phosphate: step 2/5. The protein is Phosphoglycerate kinase, glycosomal (PGKC) of Leishmania major.